The following is a 455-amino-acid chain: Pup--protein ligase (455 aa).

Position 10 (E10) interacts with Mg(2+). An ATP-binding site is contributed by R55. Residue Y57 coordinates Mg(2+). D59 serves as the catalytic Proton acceptor. Residue E65 participates in Mg(2+) binding. ATP contacts are provided by T68 and W422.

It belongs to the Pup ligase/Pup deamidase family. Pup-conjugating enzyme subfamily.

It carries out the reaction ATP + [prokaryotic ubiquitin-like protein]-L-glutamate + [protein]-L-lysine = ADP + phosphate + N(6)-([prokaryotic ubiquitin-like protein]-gamma-L-glutamyl)-[protein]-L-lysine.. The protein operates within protein degradation; proteasomal Pup-dependent pathway. It functions in the pathway protein modification; protein pupylation. Functionally, catalyzes the covalent attachment of the prokaryotic ubiquitin-like protein modifier Pup to the proteasomal substrate proteins, thereby targeting them for proteasomal degradation. This tagging system is termed pupylation. The ligation reaction involves the side-chain carboxylate of the C-terminal glutamate of Pup and the side-chain amino group of a substrate lysine. The chain is Pup--protein ligase from Sanguibacter keddieii (strain ATCC 51767 / DSM 10542 / NCFB 3025 / ST-74).